Here is a 409-residue protein sequence, read N- to C-terminus: PPE family protein PPE32 (409 aa).

The protein belongs to the mycobacterial PPE family. Interacts with host Toll-like receptor 2 (TLR2).

It is found in the secreted. The protein localises to the cell wall. The protein resides in the cell surface. In terms of biological role, virulence factor that modulates the production of host cytokines. The sequence is that of PPE family protein PPE32 from Mycobacterium tuberculosis (strain CDC 1551 / Oshkosh).